We begin with the raw amino-acid sequence, 189 residues long: GTPase NRas (189 aa).

Residues 10–18 and 29–30 contribute to the GTP site; these read GAGGVGKSA and VD. Residues 32-40 carry the Effector region motif; the sequence is YDPTIEDSY. Residue 57 to 61 coordinates GTP; the sequence is DTAGQ. Residue serine 89 is modified to Phosphoserine. Residue 116-119 participates in GTP binding; sequence NKCD. A hypervariable region region spans residues 166-185; sequence YRMKKLNSSEDGTQGCMGLP. Lysine 170 participates in a covalent cross-link: Glycyl lysine isopeptide (Lys-Gly) (interchain with G-Cter in ubiquitin). A lipid anchor (S-palmitoyl cysteine) is attached at cysteine 181. A lipid anchor (S-farnesyl cysteine) is attached at cysteine 186. The propeptide at 187–189 is removed in mature form; it reads VVM.

The protein belongs to the small GTPase superfamily. Ras family. In terms of assembly, interacts (active GTP-bound form preferentially) with RGS14. Interacts (active GTP-bound form) with RASSF7. Interacts (active GTP-bound form) with both SHOC2 and PP1c (all isoforms) to form a tertiary complex; SHOC2 and PP1c preferably bind M-Ras/MRAS, but they also bind K-Ras/KRAS, N-Ras/NRAS and H-Ras/HRAS. Palmitoylated by the ZDHHC9-GOLGA7 complex. Depalmitoylated by ABHD17A, ABHD17B and ABHD17C. A continuous cycle of de- and re-palmitoylation regulates rapid exchange between plasma membrane and Golgi. In terms of processing, acetylation at Lys-104 prevents interaction with guanine nucleotide exchange factors (GEFs). Post-translationally, ubiquitinated by the BCR(LZTR1) E3 ubiquitin ligase complex at Lys-170 in a non-degradative manner, leading to inhibit Ras signaling by decreasing Ras association with membranes. Phosphorylation at Ser-89 enhances NRAS association with its downstream effectors.

The protein resides in the cell membrane. Its subcellular location is the golgi apparatus membrane. The catalysed reaction is GTP + H2O = GDP + phosphate + H(+). Its activity is regulated as follows. Alternates between an inactive form bound to GDP and an active form bound to GTP. Activated by a guanine nucleotide-exchange factor (GEF) and inactivated by a GTPase-activating protein (GAP). Its function is as follows. Ras proteins bind GDP/GTP and possess intrinsic GTPase activity. This chain is GTPase NRas (Nras), found in Rattus norvegicus (Rat).